Reading from the N-terminus, the 379-residue chain is Succinyl-diaminopimelate desuccinylase (379 aa).

Position 70 (H70) interacts with Zn(2+). The active site involves D72. D103 lines the Zn(2+) pocket. The active-site Proton acceptor is E137. Zn(2+)-binding residues include E138, E166, and H352.

The protein belongs to the peptidase M20A family. DapE subfamily. Homodimer. Zn(2+) serves as cofactor. It depends on Co(2+) as a cofactor.

It carries out the reaction N-succinyl-(2S,6S)-2,6-diaminopimelate + H2O = (2S,6S)-2,6-diaminopimelate + succinate. The protein operates within amino-acid biosynthesis; L-lysine biosynthesis via DAP pathway; LL-2,6-diaminopimelate from (S)-tetrahydrodipicolinate (succinylase route): step 3/3. Its function is as follows. Catalyzes the hydrolysis of N-succinyl-L,L-diaminopimelic acid (SDAP), forming succinate and LL-2,6-diaminopimelate (DAP), an intermediate involved in the bacterial biosynthesis of lysine and meso-diaminopimelic acid, an essential component of bacterial cell walls. This Burkholderia multivorans (strain ATCC 17616 / 249) protein is Succinyl-diaminopimelate desuccinylase.